The primary structure comprises 148 residues: 3-dehydroquinate dehydratase (148 aa).

The active-site Proton acceptor is Tyr23. The substrate site is built by Asn75, His81, and Asp88. Residue His101 is the Proton donor of the active site. Residues Leu102–Ser103 and Arg112 contribute to the substrate site.

This sequence belongs to the type-II 3-dehydroquinase family. As to quaternary structure, homododecamer.

It catalyses the reaction 3-dehydroquinate = 3-dehydroshikimate + H2O. Its pathway is metabolic intermediate biosynthesis; chorismate biosynthesis; chorismate from D-erythrose 4-phosphate and phosphoenolpyruvate: step 3/7. In terms of biological role, catalyzes a trans-dehydration via an enolate intermediate. This is 3-dehydroquinate dehydratase from Ectopseudomonas mendocina (strain ymp) (Pseudomonas mendocina).